A 182-amino-acid polypeptide reads, in one-letter code: Bifunctional protein PyrR (182 aa).

The PRPP-binding motif lies at 98–110; that stretch reads VVLVDDVLFTGRS.

Belongs to the purine/pyrimidine phosphoribosyltransferase family. PyrR subfamily.

The catalysed reaction is UMP + diphosphate = 5-phospho-alpha-D-ribose 1-diphosphate + uracil. Its function is as follows. Regulates the transcription of the pyrimidine nucleotide (pyr) operon in response to exogenous pyrimidines. Also displays a weak uracil phosphoribosyltransferase activity which is not physiologically significant. This is Bifunctional protein PyrR from Dehalococcoides mccartyi (strain ATCC BAA-2100 / JCM 16839 / KCTC 5957 / BAV1).